The primary structure comprises 383 residues: Corticosteroid-binding globulin (383 aa).

Asn74 and Asn154 each carry an N-linked (GlcNAc...) asparagine glycan. Gln232 provides a ligand contact to cortisol. An N-linked (GlcNAc...) asparagine glycan is attached at Asn238. Gln264 serves as a coordination point for cortisol. An N-linked (GlcNAc...) asparagine glycan is attached at Asn308. Cortisol is bound at residue Trp371.

This sequence belongs to the serpin family. Produced and secreted by hepatocytes, but has also been identified in a number of glycocorticoid responsive cells (it is found in maternal lung, spleen, and ovary and fetal kidney).

It is found in the secreted. In terms of biological role, major transport protein for glucocorticoids and progestins in the blood of almost all vertebrate species. The sequence is that of Corticosteroid-binding globulin (SERPINA6) from Oryctolagus cuniculus (Rabbit).